The primary structure comprises 148 residues: Protein H2A.6 (148 aa).

The interval 120 to 148 (GAAEKESTKSPKKKAATKSPKKKTAATKE) is disordered. 2 consecutive short sequence motifs (SPKK motif) follow at residues 129 to 132 (SPKK) and 138 to 141 (SPKK). The segment covering 129 to 148 (SPKKKAATKSPKKKTAATKE) has biased composition (basic residues).

The protein belongs to the histone H2A family. As to quaternary structure, the nucleosome is a histone octamer containing two molecules each of H2A, H2B, H3 and H4 assembled in one H3-H4 heterotetramer and two H2A-H2B heterodimers. The octamer wraps approximately 147 bp of DNA. As to expression, abundant in meristematic tissues.

It is found in the nucleus. Its subcellular location is the chromosome. Functionally, core component of nucleosome. Nucleosomes wrap and compact DNA into chromatin, limiting DNA accessibility to the cellular machineries which require DNA as a template. Histones thereby play a central role in transcription regulation, DNA repair, DNA replication and chromosomal stability. DNA accessibility is regulated via a complex set of post-translational modifications of histones, also called histone code, and nucleosome remodeling. The chain is Protein H2A.6 (H2A-3) from Triticum aestivum (Wheat).